The sequence spans 102 residues: Glutaredoxin 1 (102 aa).

The 96-residue stretch at 1-96 folds into the Glutaredoxin domain; the sequence is MNKAILHTII…KLLEGQPKKK (96 aa). Cysteines 17 and 20 form a disulfide.

This sequence belongs to the glutaredoxin family. In terms of assembly, monomer.

It is found in the cytoplasm. Its function is as follows. Has a glutathione-disulfide oxidoreductase activity in the presence of NADPH and glutathione reductase. Reduces low molecular weight disulfides and proteins. The protein is Glutaredoxin 1 (grxC1) of Rickettsia felis (strain ATCC VR-1525 / URRWXCal2) (Rickettsia azadi).